The following is a 157-amino-acid chain: Small ribosomal subunit protein uS7 (157 aa).

It belongs to the universal ribosomal protein uS7 family. In terms of assembly, part of the 30S ribosomal subunit. Contacts proteins S9 and S11.

One of the primary rRNA binding proteins, it binds directly to 16S rRNA where it nucleates assembly of the head domain of the 30S subunit. Is located at the subunit interface close to the decoding center, probably blocks exit of the E-site tRNA. The polypeptide is Small ribosomal subunit protein uS7 (Chlamydia caviae (strain ATCC VR-813 / DSM 19441 / 03DC25 / GPIC) (Chlamydophila caviae)).